An 85-amino-acid polypeptide reads, in one-letter code: Homeobox protein knotted-1-like 5 (85 aa).

The region spanning Glu1–Phe21 is the ELK domain. The homeobox; TALE-type DNA-binding region spans Leu22–Ser85.

The protein belongs to the TALE/KNOX homeobox family. In terms of tissue distribution, strongly expressed in ear inflorescence primordia and shoot meristem. Weakly expressed in embryos. Absent from leaves.

The protein localises to the nucleus. In terms of biological role, probably binds to the DNA sequence 5'-TGAC-3'. The protein is Homeobox protein knotted-1-like 5 (KNOX5) of Zea mays (Maize).